A 355-amino-acid chain; its full sequence is Peptide chain release factor 1 (355 aa).

Gln233 is modified (N5-methylglutamine).

The protein belongs to the prokaryotic/mitochondrial release factor family. In terms of processing, methylated by PrmC. Methylation increases the termination efficiency of RF1.

The protein resides in the cytoplasm. Functionally, peptide chain release factor 1 directs the termination of translation in response to the peptide chain termination codons UAG and UAA. This is Peptide chain release factor 1 from Clostridium tetani (strain Massachusetts / E88).